We begin with the raw amino-acid sequence, 317 residues long: Ribosomal RNA small subunit methyltransferase H (317 aa).

S-adenosyl-L-methionine contacts are provided by residues 30–32 (GGH), aspartate 50, tyrosine 78, aspartate 95, and glutamine 102.

The protein belongs to the methyltransferase superfamily. RsmH family.

It localises to the cytoplasm. The catalysed reaction is cytidine(1402) in 16S rRNA + S-adenosyl-L-methionine = N(4)-methylcytidine(1402) in 16S rRNA + S-adenosyl-L-homocysteine + H(+). Functionally, specifically methylates the N4 position of cytidine in position 1402 (C1402) of 16S rRNA. In Nitrosomonas eutropha (strain DSM 101675 / C91 / Nm57), this protein is Ribosomal RNA small subunit methyltransferase H.